The following is a 366-amino-acid chain: Chorismate synthase (366 aa).

NADP(+) contacts are provided by Arg48 and Arg54. FMN is bound by residues 125–127 (RSS), 238–239 (NA), Gly278, 293–297 (KPTSS), and Arg319.

Belongs to the chorismate synthase family. In terms of assembly, homotetramer. FMNH2 is required as a cofactor.

It carries out the reaction 5-O-(1-carboxyvinyl)-3-phosphoshikimate = chorismate + phosphate. It functions in the pathway metabolic intermediate biosynthesis; chorismate biosynthesis; chorismate from D-erythrose 4-phosphate and phosphoenolpyruvate: step 7/7. Catalyzes the anti-1,4-elimination of the C-3 phosphate and the C-6 proR hydrogen from 5-enolpyruvylshikimate-3-phosphate (EPSP) to yield chorismate, which is the branch point compound that serves as the starting substrate for the three terminal pathways of aromatic amino acid biosynthesis. This reaction introduces a second double bond into the aromatic ring system. This Pseudoalteromonas atlantica (strain T6c / ATCC BAA-1087) protein is Chorismate synthase.